Here is a 451-residue protein sequence, read N- to C-terminus: Probable NADH dehydrogenase (451 aa).

41-71 (KLIILGCGWGSYSFLKNLNSIKYDITVISPR) contributes to the FAD binding site. 199 to 236 (LSFVIVGGGATGIEFTSELNDFFSEDLSRLFPFVPVNE) is a binding site for NAD(+).

This sequence belongs to the NADH dehydrogenase family. The cofactor is FAD.

The enzyme catalyses a ubiquinone + NADH + 5 H(+)(in) = a ubiquinol + NAD(+) + 4 H(+)(out). This Dictyostelium discoideum (Social amoeba) protein is Probable NADH dehydrogenase.